We begin with the raw amino-acid sequence, 211 residues long: Large ribosomal subunit protein uL4 (211 aa).

Polar residues predominate over residues 41–52 (QTNARQGTASTK). The segment at 41-78 (QTNARQGTASTKTRAEVRGGGRKPWRQKGTGRARAGSI) is disordered. The segment covering 60–71 (GGRKPWRQKGTG) has biased composition (basic residues).

Belongs to the universal ribosomal protein uL4 family. As to quaternary structure, part of the 50S ribosomal subunit.

In terms of biological role, one of the primary rRNA binding proteins, this protein initially binds near the 5'-end of the 23S rRNA. It is important during the early stages of 50S assembly. It makes multiple contacts with different domains of the 23S rRNA in the assembled 50S subunit and ribosome. Its function is as follows. Forms part of the polypeptide exit tunnel. This is Large ribosomal subunit protein uL4 from Rippkaea orientalis (strain PCC 8801 / RF-1) (Cyanothece sp. (strain PCC 8801)).